Consider the following 460-residue polypeptide: Kynurenine 3-monooxygenase (460 aa).

It belongs to the aromatic-ring hydroxylase family. KMO subfamily. FAD serves as cofactor.

The protein localises to the mitochondrion. It catalyses the reaction L-kynurenine + NADPH + O2 + H(+) = 3-hydroxy-L-kynurenine + NADP(+) + H2O. Its pathway is cofactor biosynthesis; NAD(+) biosynthesis; quinolinate from L-kynurenine: step 1/3. Its function is as follows. Catalyzes the hydroxylation of L-kynurenine (L-Kyn) to form 3-hydroxy-L-kynurenine (L-3OHKyn). Required for synthesis of quinolinic acid. The polypeptide is Kynurenine 3-monooxygenase (Dictyostelium discoideum (Social amoeba)).